A 180-amino-acid polypeptide reads, in one-letter code: uncharacterized protein (180 aa).

Residues 1–30 (MRHKIITFILAVVVIIIIGNMIGGGGGSEA) form the signal peptide. The tract at residues 25–46 (GGGSEATSKTSSSSKAETEKTY) is disordered. Residues 29–39 (EATSKTSSSSK) are compositionally biased toward low complexity.

Its subcellular location is the secreted. This is an uncharacterized protein from Bacillus subtilis (strain 168).